Here is a 775-residue protein sequence, read N- to C-terminus: Semaphorin-3E (775 aa).

A signal peptide spans 1–25 (MAPAGHILTLLLWGHLLELWTPGHS). Positions 32 to 516 (RLRLSHKELL…SASAVAQVRF (485 aa)) constitute a Sema domain. Residue asparagine 44 is glycosylated (N-linked (GlcNAc...) asparagine). Cysteines 105 and 115 form a disulfide. Residue asparagine 126 is glycosylated (N-linked (GlcNAc...) asparagine). A disulfide bridge connects residues cysteine 133 and cysteine 142. Residues asparagine 175 and asparagine 330 are each glycosylated (N-linked (GlcNAc...) asparagine). Disulfide bonds link cysteine 270/cysteine 382, cysteine 294/cysteine 342, and cysteine 519/cysteine 537. The 89-residue stretch at 581–669 (ALDRTEERLA…NFVHTVRKIT (89 aa)) folds into the Ig-like C2-type domain. Residue asparagine 596 is glycosylated (N-linked (GlcNAc...) asparagine). Cysteine 654 and cysteine 729 are oxidised to a cystine.

The protein belongs to the semaphorin family. As to quaternary structure, interacts with PLXND1. Detected in neurons in the thalamus. Detected in embryonic vasculature. Developing lungs, developing skeletal elements and ventral horns of the developing neural tube. Correlates positively with tumor progression.

The protein resides in the secreted. Its function is as follows. Plays an important role in signaling via the cell surface receptor PLXND1. Mediates reorganization of the actin cytoskeleton, leading to the retraction of cell projections. Promotes focal adhesion disassembly and inhibits adhesion of endothelial cells to the extracellular matrix. Regulates angiogenesis, both during embryogenesis and after birth. Can down-regulate sprouting angiogenesis. Required for normal vascular patterning during embryogenesis. Plays an important role in ensuring the specificity of synapse formation. This chain is Semaphorin-3E (Sema3e), found in Mus musculus (Mouse).